The following is a 616-amino-acid chain: Elongation factor 4 (616 aa).

One can recognise a tr-type G domain in the interval 14–195 (SRIRNFCIIA…EVIRQVPPPV (182 aa)). GTP is bound by residues 26–31 (DHGKST) and 142–145 (NKID).

The protein belongs to the TRAFAC class translation factor GTPase superfamily. Classic translation factor GTPase family. LepA subfamily.

The protein resides in the cell membrane. The enzyme catalyses GTP + H2O = GDP + phosphate + H(+). In terms of biological role, required for accurate and efficient protein synthesis under certain stress conditions. May act as a fidelity factor of the translation reaction, by catalyzing a one-codon backward translocation of tRNAs on improperly translocated ribosomes. Back-translocation proceeds from a post-translocation (POST) complex to a pre-translocation (PRE) complex, thus giving elongation factor G a second chance to translocate the tRNAs correctly. Binds to ribosomes in a GTP-dependent manner. This Nocardia farcinica (strain IFM 10152) protein is Elongation factor 4.